Here is a 1885-residue protein sequence, read N- to C-terminus: Fatty acid synthase subunit alpha (1885 aa).

Over residues 92–107 (PDPADLAPKETPKQEE) the composition is skewed to basic and acidic residues. Residues 92 to 140 (PDPADLAPKETPKQEESTPSAPAAATPTPAAAAAPTPAPAPASAGPVES) form a disordered region. Low complexity predominate over residues 108-126 (STPSAPAAATPTPAAAAAP). Residues 146–221 (VKANLLIHVL…EQFQDSFSGQ (76 aa)) form the Carrier domain. S181 carries the post-translational modification O-(pantetheine 4'-phosphoryl)serine. Residues 1121–1661 (IQEIVVQHDL…QKGAQAVVVH (541 aa)) enclose the Ketosynthase family 3 (KS3) domain. Residues C1304, H1546, and H1587 each act as for beta-ketoacyl synthase activity in the active site. D1771, V1772, and E1773 together coordinate Mg(2+). Residues 1771 to 1773 (DVE), Y1797, S1807, 1816 to 1826 (EAVFKALGVES), 1840 to 1843 (RDVN), and 1870 to 1872 (ISH) contribute to the acetyl-CoA site. Mg(2+) is bound by residues S1871 and H1872.

It belongs to the thiolase-like superfamily. Fungal fatty acid synthetase subunit alpha family. [Alpha(6)beta(6)] hexamers of two multifunctional subunits (alpha and beta).

It catalyses the reaction acetyl-CoA + n malonyl-CoA + 2n NADPH + 4n H(+) = a long-chain-acyl-CoA + n CoA + n CO2 + 2n NADP(+).. The enzyme catalyses a fatty acyl-[ACP] + malonyl-[ACP] + H(+) = a 3-oxoacyl-[ACP] + holo-[ACP] + CO2. It carries out the reaction a (3R)-hydroxyacyl-[ACP] + NADP(+) = a 3-oxoacyl-[ACP] + NADPH + H(+). Fatty acid synthetase catalyzes the formation of long-chain fatty acids from acetyl-CoA, malonyl-CoA and NADPH. The alpha subunit contains domains for: acyl carrier protein, 3-oxoacyl-[acyl-carrier-protein] reductase, and 3-oxoacyl-[acyl-carrier-protein] synthase. This chain is Fatty acid synthase subunit alpha (FAS2), found in Candida albicans (Yeast).